The chain runs to 359 residues: 5-amino-6-(D-ribitylamino)uracil--L-tyrosine 4-hydroxyphenyl transferase (359 aa).

Positions 45 to 282 (VTYVVNANIN…VYAISRIFFK (238 aa)) constitute a Radical SAM core domain. [4Fe-4S] cluster-binding residues include Cys-59, Cys-63, and Cys-66.

This sequence belongs to the radical SAM superfamily. CofH family. As to quaternary structure, consists of two subunits, CofG and CofH. Requires [4Fe-4S] cluster as cofactor.

The enzyme catalyses 5-amino-6-(D-ribitylamino)uracil + L-tyrosine + S-adenosyl-L-methionine = 5-amino-5-(4-hydroxybenzyl)-6-(D-ribitylimino)-5,6-dihydrouracil + 2-iminoacetate + 5'-deoxyadenosine + L-methionine + H(+). The protein operates within cofactor biosynthesis; coenzyme F0 biosynthesis. Catalyzes the radical-mediated synthesis of 5-amino-5-(4-hydroxybenzyl)-6-(D-ribitylimino)-5,6-dihydrouracil from 5-amino-6-(D-ribitylamino)uracil and L-tyrosine. This is 5-amino-6-(D-ribitylamino)uracil--L-tyrosine 4-hydroxyphenyl transferase from Methanococcus maripaludis (strain C7 / ATCC BAA-1331).